An 834-amino-acid chain; its full sequence is Protein EFR3 homolog cmp44E (834 aa).

One copy of the HEAT repeat lies at 120–156 (NLFVESFLRMVQKLLEDSNPNLKIMATNSFVKFANIN). Residues 595-612 (LHAISIGLLVLISRVSGI) form a helical membrane-spanning segment.

The protein belongs to the EFR3 family. In terms of tissue distribution, expression during embryogenesis is ubiquitous with notably higher levels in the CNS and brain.

The protein localises to the membrane. In terms of biological role, an essential gene required for embryogenesis; required for cell viability. The sequence is that of Protein EFR3 homolog cmp44E (stmA) from Drosophila melanogaster (Fruit fly).